We begin with the raw amino-acid sequence, 118 residues long: Small ribosomal subunit protein uS13 (118 aa).

A disordered region spans residues 94-118 (GLPVRGQRTKTNARTRKGPRKPIKK).

It belongs to the universal ribosomal protein uS13 family. As to quaternary structure, part of the 30S ribosomal subunit. Forms a loose heterodimer with protein S19. Forms two bridges to the 50S subunit in the 70S ribosome.

Its function is as follows. Located at the top of the head of the 30S subunit, it contacts several helices of the 16S rRNA. In the 70S ribosome it contacts the 23S rRNA (bridge B1a) and protein L5 of the 50S subunit (bridge B1b), connecting the 2 subunits; these bridges are implicated in subunit movement. Contacts the tRNAs in the A and P-sites. The chain is Small ribosomal subunit protein uS13 from Histophilus somni (strain 129Pt) (Haemophilus somnus).